Reading from the N-terminus, the 121-residue chain is Large ribosomal subunit protein bL31 (121 aa).

The interval 1–97 (MKEGIHPDYK…AKENRAAKRA (97 aa)) is large ribosomal subunit protein bL31. 4 residues coordinate Zn(2+): C16, C18, C36, and C39. Positions 65 to 80 (ATPAKAEPAKKAPAAE) are enriched in low complexity. The interval 65 to 121 (ATPAKAEPAKKAPAAEPAKKVEAAKENRAAKRAKAGKSKKSEAAPAAEAPAADAKPE) is disordered. Residues 74–121 (KKAPAAEPAKKVEAAKENRAAKRAKAGKSKKSEAAPAAEAPAADAKPE) are unknown. Over residues 81 to 93 (PAKKVEAAKENRA) the composition is skewed to basic and acidic residues. The span at 107 to 121 (AAPAAEAPAADAKPE) shows a compositional bias: low complexity.

Belongs to the bacterial ribosomal protein bL31 family. Type A subfamily. In terms of assembly, part of the 50S ribosomal subunit. Zn(2+) is required as a cofactor.

Its function is as follows. Binds the 23S rRNA. The polypeptide is Large ribosomal subunit protein bL31 (Anaeromyxobacter dehalogenans (strain 2CP-C)).